The following is a 146-amino-acid chain: D-aminoacyl-tRNA deacylase (146 aa).

A Gly-cisPro motif, important for rejection of L-amino acids motif is present at residues 137-138 (GP).

This sequence belongs to the DTD family. In terms of assembly, homodimer.

It is found in the cytoplasm. The enzyme catalyses glycyl-tRNA(Ala) + H2O = tRNA(Ala) + glycine + H(+). The catalysed reaction is a D-aminoacyl-tRNA + H2O = a tRNA + a D-alpha-amino acid + H(+). In terms of biological role, an aminoacyl-tRNA editing enzyme that deacylates mischarged D-aminoacyl-tRNAs. Also deacylates mischarged glycyl-tRNA(Ala), protecting cells against glycine mischarging by AlaRS. Acts via tRNA-based rather than protein-based catalysis; rejects L-amino acids rather than detecting D-amino acids in the active site. By recycling D-aminoacyl-tRNA to D-amino acids and free tRNA molecules, this enzyme counteracts the toxicity associated with the formation of D-aminoacyl-tRNA entities in vivo and helps enforce protein L-homochirality. This chain is D-aminoacyl-tRNA deacylase, found in Cellvibrio japonicus (strain Ueda107) (Pseudomonas fluorescens subsp. cellulosa).